The chain runs to 476 residues: ATP synthase subunit beta (476 aa).

153–160 (GGAGVGKT) is an ATP binding site.

This sequence belongs to the ATPase alpha/beta chains family. In terms of assembly, F-type ATPases have 2 components, CF(1) - the catalytic core - and CF(0) - the membrane proton channel. CF(1) has five subunits: alpha(3), beta(3), gamma(1), delta(1), epsilon(1). CF(0) has three main subunits: a(1), b(2) and c(9-12). The alpha and beta chains form an alternating ring which encloses part of the gamma chain. CF(1) is attached to CF(0) by a central stalk formed by the gamma and epsilon chains, while a peripheral stalk is formed by the delta and b chains.

It is found in the cell membrane. It carries out the reaction ATP + H2O + 4 H(+)(in) = ADP + phosphate + 5 H(+)(out). Produces ATP from ADP in the presence of a proton gradient across the membrane. The catalytic sites are hosted primarily by the beta subunits. The polypeptide is ATP synthase subunit beta (Latilactobacillus sakei subsp. sakei (strain 23K) (Lactobacillus sakei subsp. sakei)).